Here is a 391-residue protein sequence, read N- to C-terminus: MDPRRNFQPGGYDSRNTFTSGSFGPPDFGESDEAELVSVSWNQDYSCFAAGTSHGFRIYNCEPFKETFRRELKDGGFKIVEMLFRSNILALVGGGPNSQYPSNKVLIWDDHQGRCISEFTFRSEIRAVKLRRDRIVVVLEHKIYVYNFMDLRLLHQIENMANPRGLCCLSHHMNTSVLACPGIRRGEVRVEHFGLNMVQIINAHDSNIACMTLTLDGLLLATASTKGTLIRIFNTMDGTRLQEVRRGVDRADIYSIALSPNVQWLAVSSDKGTVHIFSLRVRVIGEDAYSTEHETSSNSLQPLVSPASGANPGSSLSFLRGVLPKYFSSEWSFSQFHVPEVTQYFAAFGAQNTIAIIGLDGSFYRCNFDPVNGGEMTQLEHFHFLKQDSPR.

A disordered region spans residues 1–24; sequence MDPRRNFQPGGYDSRNTFTSGSFG. 4 WD repeats span residues 31–69, 74–118, 203–243, and 248–287; these read SDEA…ETFR, DGGF…CISE, AHDS…RLQE, and VDRA…IGED.

This sequence belongs to the WD repeat PROPPIN family. In terms of assembly, component of the PI(3,5)P2 regulatory complex at least composed of ATG18, SAC/FIG4, FAB1 and VAC14. In terms of tissue distribution, expressed in roots, stems, flowers and leaves.

The protein localises to the preautophagosomal structure membrane. It localises to the vacuole membrane. Functionally, the PI(3,5)P2 regulatory complex regulates both the synthesis and turnover of phosphatidylinositol 3,5-bisphosphate (PtdIns(3,5)P2). Required for autophagy. The polypeptide is Autophagy-related protein 18d (ATG18D) (Arabidopsis thaliana (Mouse-ear cress)).